Reading from the N-terminus, the 245-residue chain is Probable phosphatase YE2421 (245 aa).

Zn(2+) contacts are provided by His-7, His-9, His-15, His-40, Glu-73, His-101, His-131, Asp-192, and His-194.

It belongs to the PHP family. In terms of assembly, homotrimer. Zn(2+) is required as a cofactor.

In Yersinia enterocolitica serotype O:8 / biotype 1B (strain NCTC 13174 / 8081), this protein is Probable phosphatase YE2421.